We begin with the raw amino-acid sequence, 378 residues long: Alanine dehydrogenase (378 aa).

Residues R15 and K74 each coordinate substrate. Catalysis depends on H95, which acts as the Proton donor/acceptor. NAD(+)-binding positions include S132, 176-177 (VV), D196, S218, 237-238 (VL), 265-268 (VAID), and 297-300 (VANM). D268 functions as the Proton donor/acceptor in the catalytic mechanism.

The protein belongs to the AlaDH/PNT family. In terms of assembly, homohexamer. Trimer of dimer.

It localises to the cytoplasm. The catalysed reaction is L-alanine + NAD(+) + H2O = pyruvate + NH4(+) + NADH + H(+). The protein operates within amino-acid degradation; L-alanine degradation via dehydrogenase pathway; NH(3) and pyruvate from L-alanine: step 1/1. Functionally, catalyzes the reversible oxidative deamination of L-alanine to pyruvate. Oxidative deamination proceeds through a sequential, ordered ternary-binary mechanism, where NAD(+) binds first followed by L-alanine; the products are released in the order ammonia, pyruvate and NADH. Disruption blocks sporulation probably in stage V; 20-30% sporulation can be restored if the media is supplemented with pyruvate, suggesting lack of pyruvate blocks sporulation. Thus it is a key factor in the assimilation of L-alanine as an energy source via the tricarboxylic acid cycle during sporulation. This chain is Alanine dehydrogenase, found in Bacillus subtilis (strain 168).